We begin with the raw amino-acid sequence, 406 residues long: Tryptophan synthase beta chain (406 aa).

Lys-97 is modified (N6-(pyridoxal phosphate)lysine).

It belongs to the TrpB family. As to quaternary structure, tetramer of two alpha and two beta chains. Pyridoxal 5'-phosphate is required as a cofactor.

The enzyme catalyses (1S,2R)-1-C-(indol-3-yl)glycerol 3-phosphate + L-serine = D-glyceraldehyde 3-phosphate + L-tryptophan + H2O. It participates in amino-acid biosynthesis; L-tryptophan biosynthesis; L-tryptophan from chorismate: step 5/5. Its function is as follows. The beta subunit is responsible for the synthesis of L-tryptophan from indole and L-serine. This is Tryptophan synthase beta chain from Lacticaseibacillus paracasei (strain ATCC 334 / BCRC 17002 / CCUG 31169 / CIP 107868 / KCTC 3260 / NRRL B-441) (Lactobacillus paracasei).